A 204-amino-acid chain; its full sequence is Casparian strip membrane protein 3 (204 aa).

Residues 1–41 (MKNESTFIDVPADSSSAMKGKAPLIGVAKDHTASGSGGYNR) lie on the Cytoplasmic side of the membrane. Residues 42–62 (GLSIFDFLLRLAAIVAASVAA) traverse the membrane as a helical segment. Residues 63–92 (GTMFTSDETLPFFTQFLQFQAGYDDLPTFQ) lie on the Extracellular side of the membrane. Residues 93 to 113 (FFVISMSLVSGYIVLSLPISV) form a helical membrane-spanning segment. At 114-125 (VTIVRPLAAAPR) the chain is on the cytoplasmic side. A helical membrane pass occupies residues 126–146 (LLLLVLDTAVMGLTMAAASSA). The Extracellular portion of the chain corresponds to 147–204 (AAISYVAHNGNQNTNWLPICQQFGDFCQKTSGGCGLFLCRRRVFHDPGCPLRSRSQRH).

The protein belongs to the Casparian strip membrane proteins (CASP) family. As to quaternary structure, homodimer and heterodimers.

The protein localises to the cell membrane. Regulates membrane-cell wall junctions and localized cell wall deposition. Required for establishment of the Casparian strip membrane domain (CSD) and the subsequent formation of Casparian strips, a cell wall modification of the root endodermis that determines an apoplastic barrier between the intraorganismal apoplasm and the extraorganismal apoplasm and prevents lateral diffusion. This chain is Casparian strip membrane protein 3, found in Raphanus sativus (Radish).